A 75-amino-acid polypeptide reads, in one-letter code: Rugosin-LK1 (75 aa).

Residues 1-22 (MFTMKKSLLFLFFLGTISLSFC) form the signal peptide. Positions 23 to 40 (EEERSADEDDEGEMTEEE) are excised as a propeptide.

In terms of tissue distribution, expressed by the skin glands.

Its subcellular location is the secreted. Has antimicrobial activity against Gram-positive bacteria S.aureus ATCC 2592 (MIC=10.0 uM), S.aureus ATCC 43300 (MIC=15.0 uM) and B.subtilis (MIC=40.0 uM), against Gram-negative bacteria E.coli ML-35P (MIC=10.0 uM), P.aeruginosa PA01 (MIC=5.0 uM) and P.aeruginosa ATCC 27853 (MIC=5.0 uM) and against fungus C.albicans ATCC 2002 (MIC=10.0 uM). This Limnonectes kuhlii (Kuhl's Creek frog) protein is Rugosin-LK1.